The chain runs to 118 residues: MVIKKGEIMNEIISLVSLSVIFGAMLSGFATFRLTGMRLMPHFASLMIAFILTLASLFISNNIIGYLAIAFQVITPLTVCPTICNILKTQFQNTGIYSAHLALMGMMFILALGNVILF.

Transmembrane regions (helical) follow at residues 12-32 (IISL…FATF), 39-59 (LMPH…SLFI), 63-83 (IIGY…CPTI), and 98-118 (SAHL…VILF).

The protein resides in the cell membrane. This is an uncharacterized protein from Methanocaldococcus jannaschii (strain ATCC 43067 / DSM 2661 / JAL-1 / JCM 10045 / NBRC 100440) (Methanococcus jannaschii).